The sequence spans 430 residues: Lipoyl synthase, mitochondrial (430 aa).

Residues 1-37 constitute a mitochondrion transit peptide; it reads MATSAGKLRTLYSAHSSLSSLPPSARPTLQLATLRSY. Positions 39–55 are enriched in polar residues; sequence TTTPHDSPIGNTSNTPP. Residues 39 to 58 are disordered; that stretch reads TTTPHDSPIGNTSNTPPTVK. Residues Cys-141, Cys-146, Cys-152, Cys-172, Cys-176, Cys-179, and Ser-387 each coordinate [4Fe-4S] cluster. The region spanning 155–376 is the Radical SAM core domain; that stretch reads GSSKSAATAT…KERALEMGFL (222 aa).

This sequence belongs to the radical SAM superfamily. Lipoyl synthase family. [4Fe-4S] cluster serves as cofactor.

It is found in the mitochondrion. The enzyme catalyses [[Fe-S] cluster scaffold protein carrying a second [4Fe-4S](2+) cluster] + N(6)-octanoyl-L-lysyl-[protein] + 2 oxidized [2Fe-2S]-[ferredoxin] + 2 S-adenosyl-L-methionine + 4 H(+) = [[Fe-S] cluster scaffold protein] + N(6)-[(R)-dihydrolipoyl]-L-lysyl-[protein] + 4 Fe(3+) + 2 hydrogen sulfide + 2 5'-deoxyadenosine + 2 L-methionine + 2 reduced [2Fe-2S]-[ferredoxin]. The protein operates within protein modification; protein lipoylation via endogenous pathway; protein N(6)-(lipoyl)lysine from octanoyl-[acyl-carrier-protein]: step 2/2. In terms of biological role, catalyzes the radical-mediated insertion of two sulfur atoms into the C-6 and C-8 positions of the octanoyl moiety bound to the lipoyl domains of lipoate-dependent enzymes, thereby converting the octanoylated domains into lipoylated derivatives. This Ajellomyces capsulatus (strain G186AR / H82 / ATCC MYA-2454 / RMSCC 2432) (Darling's disease fungus) protein is Lipoyl synthase, mitochondrial.